The following is a 209-amino-acid chain: Probable L-serine dehydratase, alpha chain (209 aa).

The protein belongs to the iron-sulfur dependent L-serine dehydratase family. As to quaternary structure, heterodimer of an alpha chain and a beta chain. [4Fe-4S] cluster serves as cofactor.

It carries out the reaction L-serine = pyruvate + NH4(+). It participates in carbohydrate biosynthesis; gluconeogenesis. The chain is Probable L-serine dehydratase, alpha chain (sdhA) from Latilactobacillus sakei (Lactobacillus sakei).